The chain runs to 360 residues: tRNA-specific 2-thiouridylase MnmA (360 aa).

Residues 8-15 (GMSGGVDS) and methionine 34 each bind ATP. Residues 94-96 (NPD) are interaction with target base in tRNA. The Nucleophile role is filled by cysteine 99. Cysteine 99 and cysteine 195 are oxidised to a cystine. Glycine 123 provides a ligand contact to ATP. Residues 145–147 (KDQ) form an interaction with tRNA region. Cysteine 195 (cysteine persulfide intermediate) is an active-site residue. The tract at residues 307 to 308 (RY) is interaction with tRNA.

Belongs to the MnmA/TRMU family.

The protein localises to the cytoplasm. The catalysed reaction is S-sulfanyl-L-cysteinyl-[protein] + uridine(34) in tRNA + AH2 + ATP = 2-thiouridine(34) in tRNA + L-cysteinyl-[protein] + A + AMP + diphosphate + H(+). In terms of biological role, catalyzes the 2-thiolation of uridine at the wobble position (U34) of tRNA, leading to the formation of s(2)U34. The sequence is that of tRNA-specific 2-thiouridylase MnmA from Methylobacillus flagellatus (strain ATCC 51484 / DSM 6875 / VKM B-1610 / KT).